An 809-amino-acid chain; its full sequence is Trimethylamine-N-oxide reductase 2 (809 aa).

The segment at residues 1 to 31 (MTLTRREFIKHSGIAAGTLVVTSAAPLPAWA) is a signal peptide (tat-type signal). Residue Ser-176 coordinates Mo-bis(molybdopterin guanine dinucleotide).

The protein belongs to the prokaryotic molybdopterin-containing oxidoreductase family. It depends on Mo-bis(molybdopterin guanine dinucleotide) as a cofactor. Post-translationally, predicted to be exported by the Tat system. The position of the signal peptide cleavage has not been experimentally proven.

The protein localises to the periplasm. The enzyme catalyses trimethylamine + 2 Fe(III)-[cytochrome c] + H2O = trimethylamine N-oxide + 2 Fe(II)-[cytochrome c] + 3 H(+). In terms of biological role, reduces trimethylamine-N-oxide (TMAO) into trimethylamine; an anaerobic reaction coupled to energy-yielding reactions. Can also reduce other N- and S-oxide compounds such as 4-methylmorpholine-N-oxide and biotin sulfoxide (BSO), but with a lower catalytic efficiency. The chain is Trimethylamine-N-oxide reductase 2 (torZ) from Escherichia coli O6:H1 (strain CFT073 / ATCC 700928 / UPEC).